A 25-amino-acid chain; its full sequence is Antimicrobial peptide scolopin-2 (25 aa).

Expressed by the venom gland.

The protein localises to the secreted. In terms of biological role, antimicrobial peptide against both Gram-positive, -negative and yeast. Also induces histamine release by mast cells and shows moderate hemolytic activities against both human and rabbit red cells. This is Antimicrobial peptide scolopin-2 from Scolopendra mutilans (Chinese red-headed centipede).